The following is a 519-amino-acid chain: 2,3-bisphosphoglycerate-independent phosphoglycerate mutase (519 aa).

Residues Asp-18 and Ser-68 each contribute to the Mn(2+) site. The active-site Phosphoserine intermediate is Ser-68. Residues His-129, 159 to 160, Arg-191, Arg-197, 267 to 270, and Lys-341 each bind substrate; these read RD and RADR. Positions 408, 412, 449, 450, and 468 each coordinate Mn(2+).

The protein belongs to the BPG-independent phosphoglycerate mutase family. In terms of assembly, monomer. It depends on Mn(2+) as a cofactor.

It carries out the reaction (2R)-2-phosphoglycerate = (2R)-3-phosphoglycerate. The protein operates within carbohydrate degradation; glycolysis; pyruvate from D-glyceraldehyde 3-phosphate: step 3/5. Its function is as follows. Catalyzes the interconversion of 2-phosphoglycerate and 3-phosphoglycerate. This is 2,3-bisphosphoglycerate-independent phosphoglycerate mutase from Coxiella burnetii (strain Dugway 5J108-111).